Here is a 381-residue protein sequence, read N- to C-terminus: Homoserine O-succinyltransferase (381 aa).

The region spanning 45 to 360 (NAVLVCHALN…PHGHDAFLLD (316 aa)) is the AB hydrolase-1 domain. The active-site Nucleophile is the serine 151. Position 221 (arginine 221) interacts with substrate. Catalysis depends on residues aspartate 321 and histidine 354. Position 355 (aspartate 355) interacts with substrate.

This sequence belongs to the AB hydrolase superfamily. MetX family. In terms of assembly, homodimer.

It is found in the cytoplasm. The catalysed reaction is L-homoserine + succinyl-CoA = O-succinyl-L-homoserine + CoA. The protein operates within amino-acid biosynthesis; L-methionine biosynthesis via de novo pathway; O-succinyl-L-homoserine from L-homoserine: step 1/1. In terms of biological role, transfers a succinyl group from succinyl-CoA to L-homoserine, forming succinyl-L-homoserine. In Burkholderia vietnamiensis (strain G4 / LMG 22486) (Burkholderia cepacia (strain R1808)), this protein is Homoserine O-succinyltransferase.